Reading from the N-terminus, the 299-residue chain is Recombination-associated protein RdgC (299 aa).

It belongs to the RdgC family.

It is found in the cytoplasm. It localises to the nucleoid. May be involved in recombination. This Neisseria meningitidis serogroup B (strain ATCC BAA-335 / MC58) protein is Recombination-associated protein RdgC.